The primary structure comprises 106 residues: Large ribosomal subunit protein bL21 (106 aa).

It belongs to the bacterial ribosomal protein bL21 family. Part of the 50S ribosomal subunit. Contacts protein L20.

In terms of biological role, this protein binds to 23S rRNA in the presence of protein L20. The sequence is that of Large ribosomal subunit protein bL21 from Xylella fastidiosa (strain 9a5c).